Consider the following 418-residue polypeptide: MSQTPPSFIRLLNNTSLVSQILIGMIVGILLATLIPSAAQSAGLLGTLFVGALKAVAPVLVLLLVTDSIAGHKQGQKTSIRPLLILYLFGTFCAAVVAVVASFAFPSVLHLSAQNADIVPPGGIAEVLNTLLFNVVANPVKALLEGNYIGILAWAIALGLSLRKASDTTKAVIHDLSHAVSGIVKGVIRCAPLGIMGLVASTFAETGFSALLSYAQLLIVLIGCMLFVAFVVNPLIVFWKIKRNPYPLVLMCLKESGVTAFFTRSSAANIPVNMALCEKLRLPEETYAVSIPLGATINMAGAAITITVLSMAAVNTLGISVDLATAVLLSVVATISACGASGVAGGSLLLIPLACSLFGISNDVAMQVVAVGFIIGVLQDSAETALNSSTDVLFTAAACMAEDGSLSEGNLQEDADIV.

A run of 9 helical transmembrane segments spans residues S16–P36, L45–V65, L83–F103, A142–L162, P192–L212, L218–F238, V289–L309, L317–A337, and V364–T384.

Belongs to the dicarboxylate/amino acid:cation symporter (DAACS) (TC 2.A.23) family.

The protein localises to the cell inner membrane. The catalysed reaction is L-serine(in) + Na(+)(in) = L-serine(out) + Na(+)(out). It carries out the reaction L-threonine(in) + Na(+)(in) = L-threonine(out) + Na(+)(out). Functionally, involved in the import of serine and threonine into the cell, with the concomitant import of sodium (symport system). The polypeptide is Serine/threonine transporter SstT (Tolumonas auensis (strain DSM 9187 / NBRC 110442 / TA 4)).